A 583-amino-acid chain; its full sequence is Aspartate--tRNA ligase (583 aa).

An L-aspartate-binding site is contributed by E169. Residues 193-196 form an aspartate region; that stretch reads QLFK. R215 contacts L-aspartate. ATP is bound by residues 215–217 and Q224; that span reads RDE. H443 contributes to the L-aspartate binding site. E477 is a binding site for ATP. Position 484 (R484) interacts with L-aspartate. 529–532 contributes to the ATP binding site; sequence GIDR.

The protein belongs to the class-II aminoacyl-tRNA synthetase family. Type 1 subfamily. In terms of assembly, homodimer.

It localises to the cytoplasm. The catalysed reaction is tRNA(Asp) + L-aspartate + ATP = L-aspartyl-tRNA(Asp) + AMP + diphosphate. In terms of biological role, catalyzes the attachment of L-aspartate to tRNA(Asp) in a two-step reaction: L-aspartate is first activated by ATP to form Asp-AMP and then transferred to the acceptor end of tRNA(Asp). The sequence is that of Aspartate--tRNA ligase from Stenotrophomonas maltophilia (strain R551-3).